Consider the following 375-residue polypeptide: MTPSRTLVIDDAVPYAKELFSHLGNVISLPGKEINTEHLQNADALIVRSRTQVNSALLEHTNVSFVGSTVVGLDHVDQPYLKENAIEFYSAQGCNANSVSEYVITNLVNLAIEKKFTLSEKSLAIIGVGHVGKLVEKKARALGMTVLLNDPPRARQEMSDEFIDLDNALKSDIITVHTPLTKTGQDATFHLLSTDKLKKIQPHQILINAARGGIIDEQAWINTPTESNIIDCWENEPNINPDLYNQADIATPHIAGHALDAKIAGSEMVYRALCQHWQISPDDSWRRFLPPPPPPISLSLTGNHQEDIHNVLQQCYRPEEDDAAIRANNIVVTHKKYEYYRRHYPIHREWPQHRVIKTPDPTFNNLLYSLGFQLI.

S49 is a binding site for substrate. Residues D150 and T178 each coordinate NAD(+). The active site involves R211. D231 contributes to the NAD(+) binding site. E236 is a catalytic residue. Residue H253 is the Proton donor of the active site. G256 serves as a coordination point for NAD(+).

This sequence belongs to the D-isomer specific 2-hydroxyacid dehydrogenase family. PdxB subfamily. Homodimer.

Its subcellular location is the cytoplasm. It catalyses the reaction 4-phospho-D-erythronate + NAD(+) = (R)-3-hydroxy-2-oxo-4-phosphooxybutanoate + NADH + H(+). It participates in cofactor biosynthesis; pyridoxine 5'-phosphate biosynthesis; pyridoxine 5'-phosphate from D-erythrose 4-phosphate: step 2/5. In terms of biological role, catalyzes the oxidation of erythronate-4-phosphate to 3-hydroxy-2-oxo-4-phosphonooxybutanoate. This chain is Erythronate-4-phosphate dehydrogenase, found in Hydrogenovibrio crunogenus (strain DSM 25203 / XCL-2) (Thiomicrospira crunogena).